The primary structure comprises 1413 residues: ABC transporter G family member 33 (1413 aa).

Low complexity predominate over residues 1–10; sequence MGSSFRSSSS. Positions 1-21 are disordered; the sequence is MGSSFRSSSSRNEHEDGGDEA. The span at 11-21 shows a compositional bias: basic and acidic residues; that stretch reads RNEHEDGGDEA. The 273-residue stretch at 140–412 folds into the ABC transporter 1 domain; the sequence is LKLSGVRTNE…FEECGFQCPE (273 aa). Position 172–179 (172–179) interacts with ATP; it reads GPPGCGKT. The ABC transmembrane type-2 1 domain occupies 490-702; it reads ELFRACISRE…AEIGLSVNEF (213 aa). 6 helical membrane passes run 509 to 529, 546 to 566, 580 to 600, 626 to 646, 652 to 672, and 738 to 758; these read VYLF…TVFI, CLFF…SMTV, FYPA…LSFF, FMIL…IAAI, AAMT…GFAI, and LSAL…ALSF. The region spanning 813 to 1065 is the ABC transporter 2 domain; the sequence is ITFQDLNYYV…CVIEYFQNIP (253 aa). Residue 858–865 coordinates ATP; the sequence is GISGAGKT. The 215-residue stretch at 1138–1352 folds into the ABC transmembrane type-2 2 domain; that stretch reads EQFKSCLWKM…TLNLFFSSQY (215 aa). The next 7 helical transmembrane spans lie at 1157 to 1177, 1189 to 1209, 1245 to 1265, 1276 to 1296, 1302 to 1322, 1330 to 1350, and 1385 to 1405; these read YNLM…LLFW, LFTV…NNCT, IPYI…MIGF, LYAM…LISI, VAAI…GFLI, WWVW…FFSS, and ITAI…AFFV.

This sequence belongs to the ABC transporter superfamily. ABCG family. PDR (TC 3.A.1.205) subfamily. Expressed in roots and stems.

The protein resides in the membrane. In terms of biological role, may be a general defense protein. This chain is ABC transporter G family member 33 (ABCG33), found in Arabidopsis thaliana (Mouse-ear cress).